Here is a 151-residue protein sequence, read N- to C-terminus: LANGDEVDPDGHVLNSLIETVMRLQREFANLKYAFLTVHKARSFGSGSERLYVTNKEVKNFEPLGEICSQAGGRIPSPQLENQNKAFASVLERHNKAAYLVVGDSANFTNWAAGEPNEADGTCVKADTHGSWHSASCDENLLVVCEFYFIL.

Residues 1–4 (LANG) form the signal peptide. A C-type lectin domain is found at 31 to 146 (LKYAFLTVHK…CDENLLVVCE (116 aa)). Cystine bridges form between C68–C145 and C123–C137. N107 is a glycosylation site (N-linked (GlcNAc...) asparagine).

The protein belongs to the alpha-type phospholipase A2 inhibitor family. As to quaternary structure, oligomer. As to expression, expressed by the liver.

The protein resides in the secreted. Inhibits enzymatic, anticoagulant, edema formation, myotoxicity activities induced by snakes phospholipase A2. Is oligomeric, but it is probable that each of its subunits can bind and inactive a PLA2 molecule. This chain is Phospholipase A2 inhibitor BjussuMIP, found in Bothrops jararacussu (Jararacussu).